The sequence spans 162 residues: MLNQLENLTERVGGSNKLVDRWLHVRKHLLVAYYNLVGIKPGKESYMRLNEKALDDFCQSLVDYLSAGHFSIYERILHKLEGNGQLLHAAKIWPLLEDNTQRIMDYYDSSLETAIDHDNCLEFQQALSDIGEALEARFVLEDKLIMLVFDAMHDGARVKRPA.

It belongs to the Rsd/AlgQ family. In terms of assembly, interacts with RpoD.

It localises to the cytoplasm. In terms of biological role, binds RpoD and negatively regulates RpoD-mediated transcription activation by preventing the interaction between the primary sigma factor RpoD with the catalytic core of the RNA polymerase and with promoter DNA. May be involved in replacement of the RNA polymerase sigma subunit from RpoD to RpoS during the transition from exponential growth to the stationary phase. The chain is Regulator of sigma D from Salmonella arizonae (strain ATCC BAA-731 / CDC346-86 / RSK2980).